Here is a 420-residue protein sequence, read N- to C-terminus: MKLSATTLTAASLIGYSTIVSALPYAADIDTGCTTTAHGSHQHKRAVAVTYVYETVTVDKNGQTVTPTSTEASSTVASTTTLISESSVTKSSSKVASSSESTEQIATTSSSAQTTLTSSETSTSESSVPISTSGSASTSSAASSATGSIYGDLADFSGPYEKFEDGTIPCGQFPSGQGVIPISWLDEGGWSGVENTDTSTGGSCKEGSYCSYACQPGMSKTQWPSDQPSDGRSIGGLLCKDGYLYRSNTDTDYLCEWGVDAAYVVSELSNDVAICRTDYPGTENMVIPTYVQAGDSLPLTVVDQDTYYTWQGLKTSAQYYVNNAGISVEDACVWGSSSSGVGNWAPLNFGAGSSDGVAYLSLIPNPNNGNALNFNVKIVAADDSSTVNGECIYENGSFSGGSDGCTVSVTAGKAKFVLYN.

Positions 1-24 are cleaved as a signal peptide; sequence MKLSATTLTAASLIGYSTIVSALP. The disordered stretch occupies residues 89 to 145; the sequence is TKSSSKVASSSESTEQIATTSSSAQTTLTSSETSTSESSVPISTSGSASTSSAASSA. N-linked (GlcNAc...) asparagine glycosylation is present at Asn-395.

Belongs to the SUN family. In terms of processing, glycosylated.

Its subcellular location is the secreted. The protein resides in the cell wall. Its function is as follows. Involved in the remodeling of the cell wall during the various phases of yeast culture development and under various environmental conditions and plays a role in septation. The sequence is that of Probable secreted beta-glucosidase SUN4 (SUN4) from Saccharomyces cerevisiae (strain ATCC 204508 / S288c) (Baker's yeast).